A 120-amino-acid chain; its full sequence is NAD(P)H-quinone oxidoreductase subunit 3 (120 aa).

Transmembrane regions (helical) follow at residues 6–26 (GYDA…LALV), 64–84 (MFAL…PWAV), and 89–109 (LGLL…VALA).

This sequence belongs to the complex I subunit 3 family. NDH-1 can be composed of about 15 different subunits; different subcomplexes with different compositions have been identified which probably have different functions.

Its subcellular location is the cellular thylakoid membrane. It catalyses the reaction a plastoquinone + NADH + (n+1) H(+)(in) = a plastoquinol + NAD(+) + n H(+)(out). The enzyme catalyses a plastoquinone + NADPH + (n+1) H(+)(in) = a plastoquinol + NADP(+) + n H(+)(out). In terms of biological role, NDH-1 shuttles electrons from an unknown electron donor, via FMN and iron-sulfur (Fe-S) centers, to quinones in the respiratory and/or the photosynthetic chain. The immediate electron acceptor for the enzyme in this species is believed to be plastoquinone. Couples the redox reaction to proton translocation, and thus conserves the redox energy in a proton gradient. Cyanobacterial NDH-1 also plays a role in inorganic carbon-concentration. In Synechococcus sp. (strain WH7803), this protein is NAD(P)H-quinone oxidoreductase subunit 3.